A 117-amino-acid polypeptide reads, in one-letter code: Ribosome-binding factor A (117 aa).

This sequence belongs to the RbfA family. Monomer. Binds 30S ribosomal subunits, but not 50S ribosomal subunits or 70S ribosomes.

It localises to the cytoplasm. In terms of biological role, one of several proteins that assist in the late maturation steps of the functional core of the 30S ribosomal subunit. Associates with free 30S ribosomal subunits (but not with 30S subunits that are part of 70S ribosomes or polysomes). Required for efficient processing of 16S rRNA. May interact with the 5'-terminal helix region of 16S rRNA. The chain is Ribosome-binding factor A from Leuconostoc citreum (strain KM20).